The chain runs to 620 residues: 1-deoxy-D-xylulose-5-phosphate synthase (620 aa).

Thiamine diphosphate-binding positions include H75 and 116-118; that span reads AHS. Mg(2+) is bound at residue D147. Thiamine diphosphate is bound by residues 148–149, N177, Y284, and E366; that span reads GA. N177 serves as a coordination point for Mg(2+).

The protein belongs to the transketolase family. DXPS subfamily. Homodimer. The cofactor is Mg(2+). It depends on thiamine diphosphate as a cofactor.

It catalyses the reaction D-glyceraldehyde 3-phosphate + pyruvate + H(+) = 1-deoxy-D-xylulose 5-phosphate + CO2. Its pathway is metabolic intermediate biosynthesis; 1-deoxy-D-xylulose 5-phosphate biosynthesis; 1-deoxy-D-xylulose 5-phosphate from D-glyceraldehyde 3-phosphate and pyruvate: step 1/1. In terms of biological role, catalyzes the acyloin condensation reaction between C atoms 2 and 3 of pyruvate and glyceraldehyde 3-phosphate to yield 1-deoxy-D-xylulose-5-phosphate (DXP). The chain is 1-deoxy-D-xylulose-5-phosphate synthase from Bordetella avium (strain 197N).